The following is a 360-amino-acid chain: 3-isopropylmalate dehydrogenase (360 aa).

76–89 (GPKWDKLDMAIRPE) is a binding site for NAD(+). Substrate contacts are provided by R96, R106, R134, and D224. Positions 224, 248, and 252 each coordinate Mg(2+). 282–294 (GSAPDIAGQNMAN) serves as a coordination point for NAD(+).

This sequence belongs to the isocitrate and isopropylmalate dehydrogenases family. LeuB type 1 subfamily. As to quaternary structure, homodimer. Mg(2+) serves as cofactor. The cofactor is Mn(2+).

Its subcellular location is the cytoplasm. It carries out the reaction (2R,3S)-3-isopropylmalate + NAD(+) = 4-methyl-2-oxopentanoate + CO2 + NADH. It participates in amino-acid biosynthesis; L-leucine biosynthesis; L-leucine from 3-methyl-2-oxobutanoate: step 3/4. Catalyzes the oxidation of 3-carboxy-2-hydroxy-4-methylpentanoate (3-isopropylmalate) to 3-carboxy-4-methyl-2-oxopentanoate. The product decarboxylates to 4-methyl-2 oxopentanoate. The sequence is that of 3-isopropylmalate dehydrogenase from Hahella chejuensis (strain KCTC 2396).